Here is a 277-residue protein sequence, read N- to C-terminus: 3-methyl-2-oxobutanoate hydroxymethyltransferase (277 aa).

Positions 53 and 96 each coordinate Mg(2+). 3-methyl-2-oxobutanoate is bound by residues 53–54 (DS), Asp-96, and Lys-126. A Mg(2+)-binding site is contributed by Glu-128. Glu-195 (proton acceptor) is an active-site residue.

Belongs to the PanB family. In terms of assembly, homodecamer; pentamer of dimers. The cofactor is Mg(2+).

Its subcellular location is the cytoplasm. The catalysed reaction is 3-methyl-2-oxobutanoate + (6R)-5,10-methylene-5,6,7,8-tetrahydrofolate + H2O = 2-dehydropantoate + (6S)-5,6,7,8-tetrahydrofolate. It participates in cofactor biosynthesis; (R)-pantothenate biosynthesis; (R)-pantoate from 3-methyl-2-oxobutanoate: step 1/2. Catalyzes the reversible reaction in which hydroxymethyl group from 5,10-methylenetetrahydrofolate is transferred onto alpha-ketoisovalerate to form ketopantoate. The protein is 3-methyl-2-oxobutanoate hydroxymethyltransferase of Chlorobium phaeobacteroides (strain DSM 266 / SMG 266 / 2430).